Here is a 113-residue protein sequence, read N- to C-terminus: MTTEIALKDQSCETIEKGSKAMIIPRIESYLSQMPGWDVPLDYQTLTKTFSFKNYHQTVAFVNAITWVAHKEDHHPEICFGYNECKVILTTHSIKGISQNDFIMAAKIDALLD.

It belongs to the pterin-4-alpha-carbinolamine dehydratase family.

It carries out the reaction (4aS,6R)-4a-hydroxy-L-erythro-5,6,7,8-tetrahydrobiopterin = (6R)-L-erythro-6,7-dihydrobiopterin + H2O. In Hydrogenovibrio crunogenus (strain DSM 25203 / XCL-2) (Thiomicrospira crunogena), this protein is Putative pterin-4-alpha-carbinolamine dehydratase.